Here is a 182-residue protein sequence, read N- to C-terminus: Putative manganese efflux pump MntP 2 (182 aa).

The next 6 helical transmembrane spans lie at Ile-2–Leu-22, Ala-37–Val-57, Ile-63–Ile-83, Leu-104–Thr-123, Leu-127–His-149, and Ala-162–Ser-182.

The protein belongs to the MntP (TC 9.B.29) family.

It is found in the cell inner membrane. In terms of biological role, probably functions as a manganese efflux pump. This is Putative manganese efflux pump MntP 2 from Wolinella succinogenes (strain ATCC 29543 / DSM 1740 / CCUG 13145 / JCM 31913 / LMG 7466 / NCTC 11488 / FDC 602W) (Vibrio succinogenes).